The chain runs to 78 residues: Large ribosomal subunit protein bL28 (78 aa).

The interval Met1–Arg23 is disordered.

The protein belongs to the bacterial ribosomal protein bL28 family.

This Marinomonas sp. (strain MWYL1) protein is Large ribosomal subunit protein bL28.